The chain runs to 308 residues: Ribosomal RNA small subunit methyltransferase H (308 aa).

S-adenosyl-L-methionine contacts are provided by residues 36 to 38, D55, F86, D103, and Q110; that span reads GGH.

This sequence belongs to the methyltransferase superfamily. RsmH family.

It is found in the cytoplasm. The catalysed reaction is cytidine(1402) in 16S rRNA + S-adenosyl-L-methionine = N(4)-methylcytidine(1402) in 16S rRNA + S-adenosyl-L-homocysteine + H(+). Functionally, specifically methylates the N4 position of cytidine in position 1402 (C1402) of 16S rRNA. The protein is Ribosomal RNA small subunit methyltransferase H of Helicobacter pylori (strain G27).